The sequence spans 600 residues: Sulfite reductase [NADPH] flavoprotein alpha-component (600 aa).

The Flavodoxin-like domain occupies 63–201 (ITLISASQTG…AAQAWRQRVV (139 aa)). Residues 69-74 (SQTGNA), 116-119 (STQG), and 152-161 (LGDTSYEHFC) contribute to the FMN site. One can recognise an FAD-binding FR-type domain in the interval 235-449 (ESPLTATLSV…IEHNDNFRLP (215 aa)). FAD contacts are provided by residues Thr323, Ala357, 387-390 (RLYS), 405-407 (TVG), and 420-423 (GGAS). Residues 520-521 (SR), 526-530 (KIYVQ), and Asp562 contribute to the NADP(+) site. Residue Tyr600 coordinates FAD.

It belongs to the NADPH-dependent sulphite reductase flavoprotein subunit CysJ family. The protein in the N-terminal section; belongs to the flavodoxin family. This sequence in the C-terminal section; belongs to the flavoprotein pyridine nucleotide cytochrome reductase family. In terms of assembly, alpha(8)-beta(8). The alpha component is a flavoprotein, the beta component is a hemoprotein. It depends on FAD as a cofactor. Requires FMN as cofactor.

The catalysed reaction is hydrogen sulfide + 3 NADP(+) + 3 H2O = sulfite + 3 NADPH + 4 H(+). It participates in sulfur metabolism; hydrogen sulfide biosynthesis; hydrogen sulfide from sulfite (NADPH route): step 1/1. In terms of biological role, component of the sulfite reductase complex that catalyzes the 6-electron reduction of sulfite to sulfide. This is one of several activities required for the biosynthesis of L-cysteine from sulfate. The flavoprotein component catalyzes the electron flow from NADPH -&gt; FAD -&gt; FMN to the hemoprotein component. In Cronobacter sakazakii (strain ATCC BAA-894) (Enterobacter sakazakii), this protein is Sulfite reductase [NADPH] flavoprotein alpha-component.